Reading from the N-terminus, the 1274-residue chain is DENN domain-containing protein 3 (1274 aa).

The segment at glycine 65–aspartate 108 is disordered. Residues glycine 75–leucine 245 form the uDENN domain. The span at lysine 76–lysine 88 shows a compositional bias: basic residues. Residues proline 89–aspartate 105 show a composition bias toward basic and acidic residues. A cDENN domain is found at isoleucine 268–glutamine 400. The region spanning valine 402–alanine 506 is the dDENN domain. The interval arginine 520–glutamate 970 is linker. 2 positions are modified to phosphoserine; by ULK1: serine 554 and serine 572. Tyrosine 940 carries the post-translational modification Phosphotyrosine. WD repeat units follow at residues alanine 975–alanine 1013, histidine 1019–valine 1055, serine 1059–valine 1099, arginine 1103–glycine 1140, leucine 1146–leucine 1181, glutamine 1186–methionine 1228, and threonine 1234–valine 1273.

Forms oligomers. Interacts with 6 of the 7 known isoforms of 14-3-3 proteins.

The protein localises to the cytoplasm. Functionally, guanine nucleotide exchange factor (GEF) activating Rab12. Promotes the exchange of GDP to GTP, converting inactive GDP-bound Rab12 into its active GTP-bound form. Regulates autophagy in response to starvation through Rab12 activation. Starvation leads to ULK1/2-dependent phosphorylation of Ser-554 and Ser-572, which in turn allows recruitment of 14-3-3 adapter proteins and leads to up-regulation of GEF activity towards Rab12. Also plays a role in protein transport from recycling endosomes to lysosomes, regulating, for instance, the degradation of the transferrin receptor and of the amino acid transporter PAT4. Starvation also induces phosphorylation at Tyr-940, which leads to up-regulated GEF activity and initiates autophagy. This chain is DENN domain-containing protein 3 (Dennd3), found in Mus musculus (Mouse).